The chain runs to 68 residues: Pantinin-3 (68 aa).

The first 23 residues, 1–23 (MKTQFAILLIALVLFQLLSQSDA), serve as a signal peptide directing secretion. Position 36 is a leucine amide (Leu36). Residues 40–68 (GLNELDNLDELFDGEISQADIDFLKELMS) constitute a propeptide that is removed on maturation.

The protein belongs to the non-disulfide-bridged peptide (NDBP) superfamily. Short antimicrobial peptide (group 4) family. As to expression, expressed by the venom gland.

The protein localises to the secreted. It is found in the target cell membrane. Functionally, amphipathic peptide that possesses relatively strong activities against Gram-positive bacteria and a fungus, but has very weak antimicrobial activities against Gram-negative bacteria. Also exhibits mild hemolytic activities against human erythrocytes (16 uM induce 70% of hemolysis). Furthermore, this peptide potently inhibits the growth of vancomycin-resistant Enterococcus (VRE) S13, a pathogen that can cause a number of human infections. Minimal inhibitory concentration (MIC) are the following: 16 uM against S.aureus, 6 uM against B.magaterium, 8 uM against M.luteus, 4 uM against VRE, 12 uM against methicillin-resistant S.aureus, 36 uM against E.coli, &gt;87 uM against P.putida, 87 uM against K.oxytoca, &gt;87 uM against E.cloacae, 84 uM against S.enterica and 17 uM against the fungus C.tropicalis. This chain is Pantinin-3, found in Pandinus imperator (Emperor scorpion).